Reading from the N-terminus, the 691-residue chain is Methionine--tRNA ligase (691 aa).

The 'HIGH' region signature appears at Pro12–His22. Residues Cys143, Cys146, Cys156, and Cys159 each coordinate Zn(2+). Residues Lys341–Ser345 carry the 'KMSKS' region motif. Position 344 (Lys344) interacts with ATP. The tRNA-binding domain maps to Asp585–His691.

This sequence belongs to the class-I aminoacyl-tRNA synthetase family. MetG type 1 subfamily. In terms of assembly, homodimer. The cofactor is Zn(2+).

The protein localises to the cytoplasm. The enzyme catalyses tRNA(Met) + L-methionine + ATP = L-methionyl-tRNA(Met) + AMP + diphosphate. Functionally, is required not only for elongation of protein synthesis but also for the initiation of all mRNA translation through initiator tRNA(fMet) aminoacylation. The protein is Methionine--tRNA ligase of Bordetella avium (strain 197N).